The following is a 48-amino-acid chain: Delta-stichotoxin-Hmg4b (48 aa).

Intrachain disulfides connect C3-C43, C5-C33, and C26-C44.

Belongs to the sea anemone sodium channel inhibitory toxin family. Type II subfamily.

The protein localises to the secreted. It localises to the nematocyst. Its function is as follows. Binds specifically to voltage-gated sodium channels (Nav), thereby delaying their inactivation during signal transduction. Its toxicity is greater than that of RpII (AC P01534). This is Delta-stichotoxin-Hmg4b from Heteractis magnifica (Magnificent sea anemone).